Here is a 429-residue protein sequence, read N- to C-terminus: Adenylosuccinate synthetase (429 aa).

Residues 12–18 (GDEGKGK) and 40–42 (GHT) contribute to the GTP site. Asp-13 serves as the catalytic Proton acceptor. 2 residues coordinate Mg(2+): Asp-13 and Gly-40. IMP-binding positions include 13–16 (DEGK), 38–41 (NAGH), Thr-129, Arg-143, Gln-223, Thr-238, and Arg-302. His-41 acts as the Proton donor in catalysis. 298–304 (VVTGRKR) provides a ligand contact to substrate. GTP contacts are provided by residues Arg-304, 330–332 (KLD), and 412–414 (STS).

Belongs to the adenylosuccinate synthetase family. Homodimer. The cofactor is Mg(2+).

Its subcellular location is the cytoplasm. It catalyses the reaction IMP + L-aspartate + GTP = N(6)-(1,2-dicarboxyethyl)-AMP + GDP + phosphate + 2 H(+). Its pathway is purine metabolism; AMP biosynthesis via de novo pathway; AMP from IMP: step 1/2. Plays an important role in the de novo pathway of purine nucleotide biosynthesis. Catalyzes the first committed step in the biosynthesis of AMP from IMP. The chain is Adenylosuccinate synthetase from Brucella ovis (strain ATCC 25840 / 63/290 / NCTC 10512).